A 546-amino-acid chain; its full sequence is Chaperonin GroEL 4 (546 aa).

ATP is bound by residues 30-33 (TLGP), Lys-51, 87-91 (DGTTT), Gly-415, and Asp-495. The interval 524 to 546 (APKDTPAAGQPGGPGAGGPGLDF) is disordered. Residues 533-546 (QPGGPGAGGPGLDF) are compositionally biased toward gly residues.

This sequence belongs to the chaperonin (HSP60) family. In terms of assembly, forms a cylinder of 14 subunits composed of two heptameric rings stacked back-to-back. Interacts with the co-chaperonin GroES.

The protein localises to the cytoplasm. The enzyme catalyses ATP + H2O + a folded polypeptide = ADP + phosphate + an unfolded polypeptide.. Its function is as follows. Together with its co-chaperonin GroES, plays an essential role in assisting protein folding. The GroEL-GroES system forms a nano-cage that allows encapsulation of the non-native substrate proteins and provides a physical environment optimized to promote and accelerate protein folding. This Paraburkholderia xenovorans (strain LB400) protein is Chaperonin GroEL 4.